Here is a 310-residue protein sequence, read N- to C-terminus: RING-H2 finger protein ATL60 (310 aa).

The chain crosses the membrane as a helical span at residues 24 to 44; that stretch reads VLLFSIVSIFTGILFLLLLHL. The RING-type; atypical zinc-finger motif lies at 120-162; sequence CAVCLSDLVDGDKARVLPRCNHGFHVDCIDMWFQSHSTCPLCR. Disordered regions lie at residues 170 to 201 and 240 to 260; these read DTTH…QDQS and GNFA…RSQE. A compositionally biased stretch (polar residues) spans 179–201; the sequence is LPQNQNFESGHSTNQHNPSQDQS.

It belongs to the RING-type zinc finger family. ATL subfamily.

The protein localises to the membrane. It carries out the reaction S-ubiquitinyl-[E2 ubiquitin-conjugating enzyme]-L-cysteine + [acceptor protein]-L-lysine = [E2 ubiquitin-conjugating enzyme]-L-cysteine + N(6)-ubiquitinyl-[acceptor protein]-L-lysine.. It functions in the pathway protein modification; protein ubiquitination. The sequence is that of RING-H2 finger protein ATL60 (ATL60) from Arabidopsis thaliana (Mouse-ear cress).